An 831-amino-acid chain; its full sequence is Multiphosphoryl transfer protein (831 aa).

One can recognise an HPr domain in the interval 1 to 90 (MLTIQFLCPL…EYIQVRFIDS (90 aa)). The Pros-phosphohistidine intermediate; for HPr activity role is filled by His-15. Phosphohistidine; by EI is present on His-15. The tract at residues 119–650 (GNVLASGVGV…AVKSQLRQLD (532 aa)) is PTS EI. His-298 functions as the Tele-phosphohistidine intermediate; for PTS EI activity in the catalytic mechanism. His-298 is modified (phosphohistidine; by autocatalysis). Phosphoenolpyruvate is bound by residues Arg-405 and Arg-441. Positions 540 and 564 each coordinate Mg(2+). Phosphoenolpyruvate contacts are provided by residues 563–564 (ND) and Arg-574. Cys-611 (proton donor; for EI activity) is an active-site residue. The PTS EIIA type-2 domain maps to 685 to 828 (PLLALENIFV…QSILTLLETE (144 aa)). Residue His-747 is the Tele-phosphohistidine intermediate; for PTS EIIA activity of the active site. Position 747 is a phosphohistidine; by HPr (His-747).

Belongs to the PEP-utilizing enzyme family. Mg(2+) is required as a cofactor.

The protein localises to the cytoplasm. It catalyses the reaction L-histidyl-[protein] + phosphoenolpyruvate = N(pros)-phospho-L-histidyl-[protein] + pyruvate. The enzyme catalyses D-fructose(out) + N(pros)-phospho-L-histidyl-[protein] = D-fructose 1-phosphate(in) + L-histidyl-[protein]. In terms of biological role, multifunctional protein that includes general (non sugar-specific) and sugar-specific components of the phosphoenolpyruvate-dependent sugar phosphotransferase system (sugar PTS). This major carbohydrate active transport system catalyzes the phosphorylation of incoming sugar substrates concomitantly with their translocation across the cell membrane. The enzyme II FryABC PTS system is involved in fructose transport. The chain is Multiphosphoryl transfer protein (fryA) from Escherichia coli O157:H7.